The chain runs to 565 residues: NAD-dependent malic enzyme (565 aa).

The active-site Proton donor is the Tyr-104. Arg-157 provides a ligand contact to NAD(+). Residue Lys-175 is the Proton acceptor of the active site. Residues Glu-246, Asp-247, and Asp-270 each coordinate a divalent metal cation. 2 residues coordinate NAD(+): Asp-270 and Asn-418.

The protein belongs to the malic enzymes family. As to quaternary structure, homotetramer. It depends on Mg(2+) as a cofactor. The cofactor is Mn(2+).

It catalyses the reaction (S)-malate + NAD(+) = pyruvate + CO2 + NADH. It carries out the reaction oxaloacetate + H(+) = pyruvate + CO2. The polypeptide is NAD-dependent malic enzyme (Escherichia coli O157:H7).